Here is a 383-residue protein sequence, read N- to C-terminus: Vesicle-associated membrane protein-associated protein scs2 (383 aa).

Residues M1–V123 enclose the MSP domain. Residues M1–G362 lie on the Cytoplasmic side of the membrane. Positions K127–P146 are enriched in polar residues. Disordered regions lie at residues K127–G160 and E233–E359. A phosphoserine mark is found at S236, S237, S259, S261, and S268. Positions D241–R263 are enriched in basic and acidic residues. The segment covering F289 to L300 has biased composition (basic and acidic residues). The span at A347–E359 shows a compositional bias: polar residues. A helical; Anchor for type IV membrane protein transmembrane segment spans residues I363–F383.

The protein belongs to the VAMP-associated protein (VAP) (TC 9.B.17) family. As to quaternary structure, interacts (via MSP domain) with duc1 (via FFAT-motif); the interaction is direct and serves to restrict the localization of duc1 to areas of cell membrane-endoplasmic reticulum contact sites, and away from the cell division site. Interacts with epr1.

Its subcellular location is the endoplasmic reticulum membrane. Vesicle-associated membrane protein-associated protein (VAP) implicated in maintaining the cortical endoplasmic reticulum (ER)-plasma membrane (PM) attachment. ER-PM contacts function to modulate the distribution of contractile ring components to ensure robust ring assembly. ER-PM contacts function also in controlling exocytosis and maintenance of cell polarity regulating cell shape. VAPs play an important role in regulating eisosome assembly. VAPs also contribute to ER-phagy by tethering atg8 to the ER membrane, but also by maintaining the ER-plasma membrane contact. Restricts the localization of duc1 away from the site of cell division. This is Vesicle-associated membrane protein-associated protein scs2 (scs2) from Schizosaccharomyces pombe (strain 972 / ATCC 24843) (Fission yeast).